The chain runs to 331 residues: PDZ and LIM domain protein 4 (331 aa).

Residues 1–84 form the PDZ domain; the sequence is MPHSVTLRGP…HLTLSVSRPE (84 aa). Disordered regions lie at residues 80-99, 105-152, and 221-243; these read VSRP…KAQA, DSEA…GSNS, and AGEG…ASKL. 4 positions are modified to phosphoserine: Ser112, Ser116, Ser120, and Ser135. One can recognise an LIM zinc-binding domain in the interval 254–313; that stretch reads PECTRCGHGIVGTIVKARDKLYHPECFMCSDCGLNLKQRGYFFLDERLYCESHAKARVKP.

As to quaternary structure, homodimer. Interacts (via C-terminus only or via combined C-terminus and LIM domain, but not LIM domain only) with PTPN13 (via the second or fourth PDZ domains). Found in a complex with PTPN13 and TRIP6. Interacts (via PDZ domain) with ACTN1 and ACTN2 (via C-terminal SDL residues). Interacts (via PDZ domain) with TRIP6 (via the second LIM domain or via the third LIM domain plus C-terminus). Interacts (via LIM domain) with GRIA1 (via C-terminus); this interaction as well as the interaction with alpha-actinin is required for their colocalization in early endosomes. Interacts with PDLIM1. Forms (via LIM domain) a heterodimer with PDLIM3. Interacts directly with SRC (via kinase domain and to a lesser extent the SH2 domain). Phosphorylated on tyrosine residue(s). Can be dephosphorylated by PTPN13.

The protein localises to the cytoplasm. Its subcellular location is the cytoskeleton. It localises to the cell projection. The protein resides in the dendritic spine. It is found in the early endosome membrane. The protein localises to the recycling endosome membrane. Its subcellular location is the nucleus. It localises to the perinuclear region. The protein resides in the lamellipodium. It is found in the synapse. The protein localises to the synaptosome. Suppresses SRC activation by recognizing and binding to active SRC and facilitating PTPN13-mediated dephosphorylation of SRC 'Tyr-419' leading to its inactivation. Inactivated SRC dissociates from this protein allowing the initiation of a new SRC inactivation cycle. Involved in reorganization of the actin cytoskeleton. In nonmuscle cells, binds to ACTN1 (alpha-actinin-1), increases the affinity of ACTN1 to F-actin (filamentous actin), and promotes formation of actin stress fibers. Involved in regulation of the synaptic AMPA receptor transport in dendritic spines of hippocampal pyramidal neurons directing the receptors toward an insertion at the postsynaptic membrane. Links endosomal surface-internalized GRIA1-containing AMPA receptors to the alpha-actinin/actin cytoskeleton. Increases AMPA receptor-mediated excitatory postsynaptic currents in neurons. In Bos taurus (Bovine), this protein is PDZ and LIM domain protein 4 (PDLIM4).